The following is a 144-amino-acid chain: Small ribosomal subunit protein bS6 (144 aa).

Residues 97–144 are disordered; that stretch reads DTEQSLIMKSKDEKGDKPERSERRRRDDEEGDAAPAATDTDGDNAEAA. Basic and acidic residues predominate over residues 105 to 124; that stretch reads KSKDEKGDKPERSERRRRDD.

It belongs to the bacterial ribosomal protein bS6 family.

In terms of biological role, binds together with bS18 to 16S ribosomal RNA. This chain is Small ribosomal subunit protein bS6, found in Xanthomonas campestris pv. campestris (strain 8004).